We begin with the raw amino-acid sequence, 38 residues long: Large ribosomal subunit protein bL36 (38 aa).

This sequence belongs to the bacterial ribosomal protein bL36 family.

The chain is Large ribosomal subunit protein bL36 from Bacteroides fragilis (strain ATCC 25285 / DSM 2151 / CCUG 4856 / JCM 11019 / LMG 10263 / NCTC 9343 / Onslow / VPI 2553 / EN-2).